The sequence spans 240 residues: Protein shisa-5 (240 aa).

An N-terminal signal peptide occupies residues 1 to 28 (MTAPVPAPRILLPLLLLLLLTPPPGARG). At 29-105 (EVCMASRGLS…RPGYNDPMSG (77 aa)) the chain is on the extracellular side. The helical transmembrane segment at 106–126 (FGATLAVGLTIFVLSVVTIII) threads the bilayer. Residues 127–240 (CFTCSCCCLY…AYMDAPKAAL (114 aa)) lie on the Cytoplasmic side of the membrane.

It belongs to the shisa family. In terms of assembly, interacts with PDCD6; PDCD6 can stabilize SHISA5.

The protein localises to the endoplasmic reticulum membrane. It is found in the nucleus membrane. Can induce apoptosis in a caspase-dependent manner and plays a role in p53/TP53-dependent apoptosis. This is Protein shisa-5 (SHISA5) from Homo sapiens (Human).